Reading from the N-terminus, the 692-residue chain is Potassium-transporting ATPase ATP-binding subunit (692 aa).

4 consecutive transmembrane segments (helical) span residues 50 to 70, 77 to 97, 240 to 260, and 266 to 286; these read PIMFVVEIGFIITFILSFLPS, GWFNITVSLILLFTVLFANFA, LTLIFLIVVVTLPIFTNYLGF, and VLVALLVCLIPTTIGGLLSAI. Catalysis depends on Asp-319, which acts as the 4-aspartylphosphate intermediate. Residues Asp-356, Glu-360, 388-395, and Lys-407 each bind ATP; that span reads FKAETRMS. Mg(2+) contacts are provided by Asp-530 and Asp-534. 3 consecutive transmembrane segments (helical) span residues 600 to 620, 628 to 648, and 672 to 692; these read FAIIPAMFTLAIPQMEALNIM, AILSALIFNAVIIPLLIPLAM, and GGVIVPFIGIKVIDIIVGLFI.

Belongs to the cation transport ATPase (P-type) (TC 3.A.3) family. Type IA subfamily. As to quaternary structure, the system is composed of three essential subunits: KdpA, KdpB and KdpC.

It is found in the cell membrane. The enzyme catalyses K(+)(out) + ATP + H2O = K(+)(in) + ADP + phosphate + H(+). Part of the high-affinity ATP-driven potassium transport (or Kdp) system, which catalyzes the hydrolysis of ATP coupled with the electrogenic transport of potassium into the cytoplasm. This subunit is responsible for energy coupling to the transport system and for the release of the potassium ions to the cytoplasm. In Bacillus cereus (strain 03BB102), this protein is Potassium-transporting ATPase ATP-binding subunit.